A 275-amino-acid chain; its full sequence is Large ribosomal subunit protein uL2cz (275 aa).

Disordered regions lie at residues 1–22 (MAIHLYKTSTPSTRNGAVDSQV) and 226–275 (NPVD…RRRK).

Belongs to the universal ribosomal protein uL2 family. As to quaternary structure, part of the 50S ribosomal subunit.

The protein localises to the plastid. The protein resides in the chloroplast. This chain is Large ribosomal subunit protein uL2cz (rpl2-A), found in Chloranthus spicatus (Chulantree).